The primary structure comprises 341 residues: tRNA N6-adenosine threonylcarbamoyltransferase (341 aa).

Residues histidine 116 and histidine 120 each coordinate Fe cation. Residues 139–143 (LVSGG), aspartate 172, glycine 185, and asparagine 274 each bind substrate. Aspartate 302 lines the Fe cation pocket.

Belongs to the KAE1 / TsaD family. It depends on Fe(2+) as a cofactor.

The protein localises to the cytoplasm. The catalysed reaction is L-threonylcarbamoyladenylate + adenosine(37) in tRNA = N(6)-L-threonylcarbamoyladenosine(37) in tRNA + AMP + H(+). In terms of biological role, required for the formation of a threonylcarbamoyl group on adenosine at position 37 (t(6)A37) in tRNAs that read codons beginning with adenine. Is involved in the transfer of the threonylcarbamoyl moiety of threonylcarbamoyl-AMP (TC-AMP) to the N6 group of A37, together with TsaE and TsaB. TsaD likely plays a direct catalytic role in this reaction. In Vesicomyosocius okutanii subsp. Calyptogena okutanii (strain HA), this protein is tRNA N6-adenosine threonylcarbamoyltransferase.